We begin with the raw amino-acid sequence, 1046 residues long: FERM, ARHGEF and pleckstrin domain-containing protein 1 (1046 aa).

The region spanning 40-320 is the FERM domain; it reads ISIKIQMLDD…EHHAFFRLFE (281 aa). The interval 374 to 522 is disordered; that stretch reads LTAQPSEQHA…LISPLLNDPS (149 aa). The segment covering 413 to 424 has biased composition (basic and acidic residues); that stretch reads KELKASTEDTGQ. Residues 458–513 show a composition bias toward polar residues; that stretch reads RMQQNRPQSQQPSTAGSLTGSPHLSELSINSQGGPSVANMSLSPNLSPDAKQSSPL. Residues 541 to 732 enclose the DH domain; the sequence is KAYFIAKEVA…TEMMAQLHGN (192 aa). Residues 761 to 858 form the PH 1 domain; it reads EFIRLGSLSK…WIEDIQMAID (98 aa). The segment at 864 to 907 is disordered; the sequence is SDPVPELLASSPPDNKSPDETTVDQESEDDLSASRTSLERQSPH. Residues 884–894 are compositionally biased toward acidic residues; the sequence is TTVDQESEDDL. The 98-residue stretch at 933 to 1030 folds into the PH 2 domain; sequence ENQLSGNLLR…WMEVIRSATS (98 aa).

In terms of assembly, interacts with PLXNA4. In terms of tissue distribution, detected in lateral motor column motor neurons and in preganglionic autonomic motor neurons of the column of Terni in the embryonic spinal cord (at protein level).

The protein resides in the cell membrane. It is found in the synapse. Its subcellular location is the synaptosome. It localises to the cytoplasm. The protein localises to the cytosol. The protein resides in the cell projection. It is found in the filopodium. Its subcellular location is the dendrite. It localises to the dendritic spine. Its function is as follows. Functions as a guanine nucleotide exchange factor for RAC1. Plays a role in semaphorin signaling via its interaction with PLXNA4. Plays a role in the assembly and disassembly of dendritic filopodia, the formation of dendritic spines, regulation of dendrite length and ultimately the formation of synapses. The sequence is that of FERM, ARHGEF and pleckstrin domain-containing protein 1 (FARP1) from Gallus gallus (Chicken).